The chain runs to 329 residues: DNA-directed RNA polymerase subunit alpha (329 aa).

Residues 1–235 are alpha N-terminal domain (alpha-NTD); sequence MVREKVKVST…DLFIPFLHTE (235 aa). The alpha C-terminal domain (alpha-CTD) stretch occupies residues 269–329; sequence IALKYIFIDQ…KQILGILEKK (61 aa).

This sequence belongs to the RNA polymerase alpha chain family. In plastids the minimal PEP RNA polymerase catalytic core is composed of four subunits: alpha, beta, beta', and beta''. When a (nuclear-encoded) sigma factor is associated with the core the holoenzyme is formed, which can initiate transcription.

The protein localises to the plastid. It localises to the chloroplast. The enzyme catalyses RNA(n) + a ribonucleoside 5'-triphosphate = RNA(n+1) + diphosphate. Functionally, DNA-dependent RNA polymerase catalyzes the transcription of DNA into RNA using the four ribonucleoside triphosphates as substrates. The sequence is that of DNA-directed RNA polymerase subunit alpha from Gossypium hirsutum (Upland cotton).